Reading from the N-terminus, the 308-residue chain is Aspartate carbamoyltransferase catalytic subunit (308 aa).

2 residues coordinate carbamoyl phosphate: Arg-59 and Thr-60. L-aspartate is bound at residue Lys-87. Residues Arg-109, His-137, and Gln-140 each contribute to the carbamoyl phosphate site. L-aspartate contacts are provided by Arg-170 and Arg-224. Residues Gly-265 and Pro-266 each contribute to the carbamoyl phosphate site.

Belongs to the aspartate/ornithine carbamoyltransferase superfamily. ATCase family. As to quaternary structure, heterododecamer (2C3:3R2) of six catalytic PyrB chains organized as two trimers (C3), and six regulatory PyrI chains organized as three dimers (R2).

The catalysed reaction is carbamoyl phosphate + L-aspartate = N-carbamoyl-L-aspartate + phosphate + H(+). It functions in the pathway pyrimidine metabolism; UMP biosynthesis via de novo pathway; (S)-dihydroorotate from bicarbonate: step 2/3. Functionally, catalyzes the condensation of carbamoyl phosphate and aspartate to form carbamoyl aspartate and inorganic phosphate, the committed step in the de novo pyrimidine nucleotide biosynthesis pathway. The polypeptide is Aspartate carbamoyltransferase catalytic subunit (Flavobacterium psychrophilum (strain ATCC 49511 / DSM 21280 / CIP 103535 / JIP02/86)).